Here is a 76-residue protein sequence, read N- to C-terminus: Small ribosomal subunit protein bS18 (76 aa).

The protein belongs to the bacterial ribosomal protein bS18 family. In terms of assembly, part of the 30S ribosomal subunit. Forms a tight heterodimer with protein bS6.

Its function is as follows. Binds as a heterodimer with protein bS6 to the central domain of the 16S rRNA, where it helps stabilize the platform of the 30S subunit. The polypeptide is Small ribosomal subunit protein bS18 (Brevibacillus brevis (strain 47 / JCM 6285 / NBRC 100599)).